Consider the following 409-residue polypeptide: Histidine--tRNA ligase (409 aa).

This sequence belongs to the class-II aminoacyl-tRNA synthetase family.

The protein localises to the cytoplasm. The catalysed reaction is tRNA(His) + L-histidine + ATP = L-histidyl-tRNA(His) + AMP + diphosphate + H(+). The polypeptide is Histidine--tRNA ligase (Methanosphaerula palustris (strain ATCC BAA-1556 / DSM 19958 / E1-9c)).